The following is a 232-amino-acid chain: Very-long-chain (3R)-3-hydroxyacyl-CoA dehydratase 4 (232 aa).

At 1–19 (MGPLALPAWLQPRYRKNAY) the chain is on the cytoplasmic side. Residues 20–40 (LFIYYLIQFCGHSWIFTNMTV) form a helical membrane-spanning segment. Topologically, residues 41 to 56 (RFFSFGKDSMVDTFYA) are lumenal. The helical transmembrane segment at 57 to 77 (IGLVMRLCQSVSLLELLHIYV) threads the bilayer. The Cytoplasmic segment spans residues 78 to 112 (GIESNHLLPRFLQLTERIIILFVVITSQEEVQEKY). A helical membrane pass occupies residues 113–133 (VVCVLFVFWNLLDMVRYTYSM). The Lumenal portion of the chain corresponds to 134 to 135 (LS). Residues 136 to 156 (VIGISYAVLTWLSQTLWMPIY) form a helical membrane-spanning segment. The active site involves Tyr156. Residue Pro157 is a topological domain, cytoplasmic. The helical transmembrane segment at 158 to 178 (LCVLAEAFAIYQSLPYFESFG) threads the bilayer. Glu163 is an active-site residue. Residues 179–189 (TYSTKLPFDLS) lie on the Lumenal side of the membrane. The helical transmembrane segment at 190 to 210 (IYFPYVLKIYLMMLFIGMYFT) threads the bilayer. Over 211-232 (YSHLYSERRDILGIFPIKKKKM) the chain is Cytoplasmic.

This sequence belongs to the very long-chain fatty acids dehydratase HACD family. In terms of assembly, may interact with enzymes of the ELO family (including ELOVL1); with those enzymes that mediate condensation, the first of the four steps of the reaction cycle responsible for fatty acids elongation, may be part of a larger fatty acids elongase complex. Highly expressed in leukocytes, and low expression in heart, spleen, kidney, and placenta.

The protein resides in the endoplasmic reticulum membrane. The enzyme catalyses a very-long-chain (3R)-3-hydroxyacyl-CoA = a very-long-chain (2E)-enoyl-CoA + H2O. It carries out the reaction (3R)-hydroxyhexadecanoyl-CoA = (2E)-hexadecenoyl-CoA + H2O. It participates in lipid metabolism; fatty acid biosynthesis. In terms of biological role, catalyzes the third of the four reactions of the long-chain fatty acids elongation cycle. This endoplasmic reticulum-bound enzymatic process, allows the addition of two carbons to the chain of long- and very long-chain fatty acids/VLCFAs per cycle. This enzyme catalyzes the dehydration of the 3-hydroxyacyl-CoA intermediate into trans-2,3-enoyl-CoA, within each cycle of fatty acid elongation. Thereby, it participates in the production of VLCFAs of different chain lengths that are involved in multiple biological processes as precursors of membrane lipids and lipid mediators. The chain is Very-long-chain (3R)-3-hydroxyacyl-CoA dehydratase 4 from Homo sapiens (Human).